Here is a 300-residue protein sequence, read N- to C-terminus: Protoheme IX farnesyltransferase (300 aa).

The next 9 helical transmembrane spans lie at 28–48, 50–70, 100–120, 122–142, 149–169, 176–196, 222–242, 243–263, and 280–300; these read VVALMLLTVLVGMCLAMPTIL, VQPLIAGLLGIAMMAGSAAAL, ALIFAAALGSLGFVILYVFTN, LTAWLTFASLIGYALIYTAYL, NIVIGGLAGAMPPLLGWTAVT, ALLLVIIIFLWTPPHFWALAI, CILLYTILLAIACLLPVLVGM, SGPLYFVCSSALSCGFIYKAW, and FSIYHLMLLFMALLLDHYLWA.

This sequence belongs to the UbiA prenyltransferase family. Protoheme IX farnesyltransferase subfamily.

The protein localises to the cell inner membrane. The enzyme catalyses heme b + (2E,6E)-farnesyl diphosphate + H2O = Fe(II)-heme o + diphosphate. It functions in the pathway porphyrin-containing compound metabolism; heme O biosynthesis; heme O from protoheme: step 1/1. Functionally, converts heme B (protoheme IX) to heme O by substitution of the vinyl group on carbon 2 of heme B porphyrin ring with a hydroxyethyl farnesyl side group. This is Protoheme IX farnesyltransferase from Shewanella oneidensis (strain ATCC 700550 / JCM 31522 / CIP 106686 / LMG 19005 / NCIMB 14063 / MR-1).